Consider the following 225-residue polypeptide: Polyadenylate-binding protein 2 (225 aa).

Residues 1–36 (MADEDISLNEDQLLESMEETNGEQETEIVTETEEEG) show a composition bias toward acidic residues. Positions 1-42 (MADEDISLNEDQLLESMEETNGEQETEIVTETEEEGSMQIDP) are disordered. The stretch at 14–74 (LESMEETNGE…QSEVDKQMAG (61 aa)) forms a coiled coil. The RRM domain maps to 96–173 (RSVYVGNVDY…RQIKVMSKRT (78 aa)).

It localises to the nucleus. The protein localises to the cytoplasm. Functionally, involved in the 3'-end formation of mRNA precursors (pre-mRNA) by the addition of a poly(A) tail of 200-250 nt to the upstream cleavage product. Stimulates poly(A) polymerase (PAPOLA) conferring processivity on the poly(A) tail elongation reaction and also controls the poly(A) tail length. Increases the affinity of poly(A) polymerase for RNA. Binds to poly(A) and to poly(G) with high affinity. May protect the poly(A) tail from degradation. The chain is Polyadenylate-binding protein 2 from Drosophila pseudoobscura pseudoobscura (Fruit fly).